The primary structure comprises 338 residues: Peroxidase 15 (338 aa).

The N-terminal stretch at Met-1 to Cys-22 is a signal peptide. Cystine bridges form between Cys-45–Cys-125, Cys-78–Cys-83, Cys-131–Cys-332, and Cys-210–Cys-242. His-76 acts as the Proton acceptor in catalysis. Ca(2+)-binding residues include Asp-77, Val-80, Gly-82, Asp-84, and Ser-86. Pro-173 serves as a coordination point for substrate. Asn-176 carries N-linked (GlcNAc...) asparagine glycosylation. His-203 contacts heme b. Thr-204 contributes to the Ca(2+) binding site. Residues Asn-219 and Asn-250 are each glycosylated (N-linked (GlcNAc...) asparagine). Residues Asp-255, Ser-258, and Asp-263 each contribute to the Ca(2+) site.

The protein belongs to the peroxidase family. Classical plant (class III) peroxidase subfamily. The cofactor is heme b. It depends on Ca(2+) as a cofactor.

The protein localises to the secreted. It catalyses the reaction 2 a phenolic donor + H2O2 = 2 a phenolic radical donor + 2 H2O. Functionally, removal of H(2)O(2), oxidation of toxic reductants, biosynthesis and degradation of lignin, suberization, auxin catabolism, response to environmental stresses such as wounding, pathogen attack and oxidative stress. These functions might be dependent on each isozyme/isoform in each plant tissue. This chain is Peroxidase 15 (PER15), found in Arabidopsis thaliana (Mouse-ear cress).